The following is a 210-amino-acid chain: Regulator of G-protein signaling 17 (210 aa).

The interval 1 to 21 (MRKRQQSQNEGTQAVSQAPGN) is disordered. One can recognise an RGS domain in the interval 84 to 200 (NFDKMMKTPA…LNSQIYKAFV (117 aa)). Residue tyrosine 137 is modified to Phosphotyrosine.

In terms of assembly, interacts with GNAI1 and GNAQ. Interacts with GNAZ and GNAI2. Interacts with OPRM1. Forms a complex with mu-opioid receptors and G(alpha)z/i2 subunits, including GNAZ and GNAI2; the formation of this complex results in mu-opioid receptor desensitization. Interacts with HINT1. Post-translationally, N- and O-glycosylated in synapsomal membranes. In terms of processing, serine phosphorylated in synapsomal membranes. Sumoylated with SUMO1 and SUM02 in synaptosomes. The sumoylated forms act as a scaffold for sequestering mu-opioid receptor-activated G(alpha) subunits. Desumoylated by HINT1. Detected in brain (at protein level). Highly expressed in the hypothalamus, periaqueductal gray matter, and pons-medulla. Lower levels in the thalamus, cortex and spinal cord. Weak expression in the striatum and cerebellum.

It localises to the membrane. The protein resides in the synapse. It is found in the synaptosome. Its subcellular location is the nucleus. The protein localises to the cytoplasm. In terms of biological role, regulates G protein-coupled receptor signaling cascades, including signaling via muscarinic acetylcholine receptor CHRM2 and dopamine receptor DRD2. Inhibits signal transduction by increasing the GTPase activity of G protein alpha subunits, thereby driving them into their inactive GDP-bound form. Binds selectively to GNAZ and GNAI2 subunits, accelerates their GTPase activity and regulates their signaling activities. Negatively regulates mu-opioid receptor-mediated activation of the G-proteins. The polypeptide is Regulator of G-protein signaling 17 (Rgs17) (Mus musculus (Mouse)).